Reading from the N-terminus, the 310-residue chain is Putative methyltransferase mtx subunit H (310 aa).

The protein belongs to the MtrH family. May be part of a complex composed of 3 subunits; MtxA, MtxH and MtxX.

In Methanosarcina barkeri (strain Fusaro / DSM 804), this protein is Putative methyltransferase mtx subunit H (mtxH).